Consider the following 279-residue polypeptide: Movement protein (279 aa).

The tract at residues 246-279 (SESEELNVESPPAAIGSSSASRSEAFRPQVVNGL) is disordered. A compositionally biased stretch (low complexity) spans 254 to 268 (ESPPAAIGSSSASRS).

Belongs to the cucumovirus movement protein family.

Its subcellular location is the host cell junction. It localises to the host plasmodesma. In terms of biological role, transports viral genome to neighboring plant cells directly through plasmosdesmata, without any budding. The movement protein allows efficient cell to cell propagation, by bypassing the host cell wall barrier. Acts by forming a tubular structure at the host plasmodesmata, enlarging it enough to allow free passage of virion capsids. The polypeptide is Movement protein (Cucumber mosaic virus (strain CS) (CMV)).